A 23-amino-acid polypeptide reads, in one-letter code: Testis ecdysiotropin peptide B (23 aa).

Stimulates synthesis of ecdysteroid in the testes of larvae and pupae. The polypeptide is Testis ecdysiotropin peptide B (Lymantria dispar (Gypsy moth)).